Reading from the N-terminus, the 263-residue chain is Homeobox protein CDX-1 (263 aa).

Residues 47-108 are disordered; sequence PGINSDPHHG…VQPPGSGLLP (62 aa). The segment covering 82–97 has biased composition (polar residues); sequence SSANPTQIAFSPSDYN. A DNA-binding region (homeobox) is located at residues 150–209; sequence KDKYRVVYTDHQRLELEKEFHYSRYITIRRKAELAAALGLTERQVKIWFQNRRAKERKVN. Residues 153-174 are interaction with DNA; the sequence is YRVVYTDHQRLELEKEFHYSRY. Residues 192-203 form an interaction with 5-mCpG DNA region; it reads RQVKIWFQNRRA. Residues 204 to 213 show a composition bias toward basic residues; it reads KERKVNKKKM. Residues 204-263 form a disordered region; the sequence is KERKVNKKKMQQQSQQASTTTPTPPSVGTTAGMGGLCSSSSSNSNLVSPSSMPIKEEYLS. Composition is skewed to low complexity over residues 214 to 233 and 241 to 254; these read QQQS…VGTT and SSSS…SPSS.

This sequence belongs to the Caudal homeobox family.

It is found in the nucleus. Its function is as follows. Plays a role in transcriptional regulation. Involved in activated KRAS-mediated transcriptional activation of PRKD1. Binds to the PRKD1 promoter. Could play a role in the terminal differentiation of the intestine. Binds preferentially to methylated DNA. This is Homeobox protein CDX-1 (cdx1) from Xenopus laevis (African clawed frog).